A 561-amino-acid polypeptide reads, in one-letter code: Protein NRT1/ PTR FAMILY 5.13 (561 aa).

Residues Ala78–Leu98 traverse the membrane as a helical segment. Thr103 is subject to Phosphothreonine. A run of 10 helical transmembrane segments spans residues Ile104 to Leu124, Ser133 to Gly153, Phe183 to Val203, Trp211 to Leu231, Ile324 to Phe344, Ile361 to Tyr381, Ile405 to Lys425, Ile447 to Gly467, Ala486 to Ile506, and Tyr530 to Ser550.

It belongs to the major facilitator superfamily. Proton-dependent oligopeptide transporter (POT/PTR) (TC 2.A.17) family. Expressed in roots, flowers and siliques. Detected in stems and leaves.

It localises to the membrane. The protein is Protein NRT1/ PTR FAMILY 5.13 (NPF5.13) of Arabidopsis thaliana (Mouse-ear cress).